We begin with the raw amino-acid sequence, 67 residues long: Cell division protein ZapB (67 aa).

Positions 3 to 59 (LELLSQLETKIQTALETIELLKLELDEEKEKAANLAEQNHQLKQELSSWNDKITGLV) form a coiled coil.

This sequence belongs to the ZapB family. As to quaternary structure, homodimer. The ends of the coiled-coil dimer bind to each other, forming polymers. Interacts with FtsZ.

It localises to the cytoplasm. Its function is as follows. Non-essential, abundant cell division factor that is required for proper Z-ring formation. It is recruited early to the divisome by direct interaction with FtsZ, stimulating Z-ring assembly and thereby promoting cell division earlier in the cell cycle. Its recruitment to the Z-ring requires functional FtsA or ZipA. The sequence is that of Cell division protein ZapB from Shewanella amazonensis (strain ATCC BAA-1098 / SB2B).